The chain runs to 1215 residues: Kinesin-like protein KIN-7I (1215 aa).

The 325-residue stretch at 3–327 (RIHVAVRARP…LQFASRALRV (325 aa)) folds into the Kinesin motor domain. 79-86 (GQTNSGKT) lines the ATP pocket. 4 coiled-coil regions span residues 333–414 (VNEI…IENL), 571–646 (ESEA…AAYE), 708–855 (IRDY…KRDS), and 894–979 (DMEA…KEDM).

Belongs to the TRAFAC class myosin-kinesin ATPase superfamily. Kinesin family. KIN-7 subfamily.

This Oryza sativa subsp. japonica (Rice) protein is Kinesin-like protein KIN-7I.